A 371-amino-acid polypeptide reads, in one-letter code: Phospho-N-acetylmuramoyl-pentapeptide-transferase (371 aa).

10 helical membrane passes run 25-45 (YLTF…VAMG), 79-99 (TMGG…FADL), 104-124 (VWVV…DDYA), 139-159 (KLIA…IFAP), 179-199 (LVIN…AGFS), 210-230 (GLAI…AYLV), 247-267 (VGEL…FLWY), 274-294 (IFMG…IAVC), 299-319 (LVLG…MIQV), and 348-368 (TVVI…LATL).

The protein belongs to the glycosyltransferase 4 family. MraY subfamily. It depends on Mg(2+) as a cofactor.

The protein resides in the cell inner membrane. The enzyme catalyses UDP-N-acetyl-alpha-D-muramoyl-L-alanyl-gamma-D-glutamyl-meso-2,6-diaminopimeloyl-D-alanyl-D-alanine + di-trans,octa-cis-undecaprenyl phosphate = di-trans,octa-cis-undecaprenyl diphospho-N-acetyl-alpha-D-muramoyl-L-alanyl-D-glutamyl-meso-2,6-diaminopimeloyl-D-alanyl-D-alanine + UMP. It functions in the pathway cell wall biogenesis; peptidoglycan biosynthesis. Catalyzes the initial step of the lipid cycle reactions in the biosynthesis of the cell wall peptidoglycan: transfers peptidoglycan precursor phospho-MurNAc-pentapeptide from UDP-MurNAc-pentapeptide onto the lipid carrier undecaprenyl phosphate, yielding undecaprenyl-pyrophosphoryl-MurNAc-pentapeptide, known as lipid I. The polypeptide is Phospho-N-acetylmuramoyl-pentapeptide-transferase (Caulobacter sp. (strain K31)).